Reading from the N-terminus, the 2947-residue chain is 3'-5' exoribonuclease HELZ2 (2947 aa).

The segment at 85–114 (PMRYQVCHYYRPGLGCRRHWNRCTFARSPE) adopts a C3H1-type 1 zinc-finger fold. A C2H2-type zinc finger spans residues 167 to 187 (CFTCCPPCLCPVDPRGHCPKH). The segment at 221-245 (YCMYVGRGVPCRHGASRCEYAHSAV) adopts a C3H1-type 2 zinc-finger fold. A C2H2-type; atypical zinc finger spans residues 289–311 (CHACLVTCNSQEAFENHCSSLEH). The UvrD-like helicase ATP-binding domain occupies 769-1317 (VGLIAGRRPE…ELLDESQQVT (549 aa)). Residue 790–797 (GPFGTGKT) participates in ATP binding. The segment at 809–1290 (QQPHTKVLIC…GGMSEEDSES (482 aa)) is interaction with THRAP3. Positions 913–916 (DEAA) match the DEAA box motif. Positions 1260–1292 (EDTASGNSASRDAAAEVSTLEGGMSEEDSESDF) are disordered. 4 consecutive short sequence motifs (LXXLL motif) follow at residues 1306–1310 (LKELL), 1348–1352 (LWKFL), 1403–1407 (LVQIL), and 2240–2244 (LEGLP). Arg2381 carries the omega-N-methylarginine modification. The segment at 2413–2947 (PEPCRGNWPR…RVQRKSALSS (535 aa)) is interaction with THRAP3. The 278-residue stretch at 2449–2726 (LNQSQDRAVR…IMLDTQYRMH (278 aa)) folds into the UvrD-like helicase ATP-binding 2 domain. ATP is bound at residue 2470–2477 (GPPGTGKT). Positions 2525–2529 (LGGLL) match the LXXLL motif 5 motif.

The protein belongs to the DNA2/NAM7 helicase family. As to quaternary structure, interacts with PPARA (via DNA-binding domain) and PPARG; the interaction stimulates the transcriptional activity of PPARA and PPARG. Interacts with THRAP3; the interaction is direct and HELZ2 and THRAP3 synergistically enhance the transcriptional activity of PPARG. It is probably part of the peroxisome proliferator activated receptor alpha interacting complex (PRIC).

It is found in the cytoplasm. The catalysed reaction is Exonucleolytic cleavage in the 3'- to 5'-direction to yield nucleoside 5'-phosphates.. The enzyme catalyses ATP + H2O = ADP + phosphate + H(+). In terms of biological role, can degrade highly structured RNAs through its concerted ATP-dependent RNA helicase and 3' to 5' exoribonuclease activities. Shows a strong preference for pyrimidine over purine residues for its nuclease activity. Acts as a transcriptional coactivator for a number of nuclear receptors including PPARA, PPARG, THRA, THRB and RXRA. The polypeptide is 3'-5' exoribonuclease HELZ2 (Helz2) (Mus musculus (Mouse)).